The sequence spans 31 residues: Protamine PTP4 (31 aa).

The segment at 1–31 (MPRRRRASRRIRRRRRPRVSRRRRGGRRRRR) is disordered.

As to expression, testis.

The protein resides in the nucleus. The protein localises to the chromosome. Protamines substitute for histones in the chromatin of sperm during the haploid phase of spermatogenesis. They compact sperm DNA into a highly condensed, stable and inactive complex. In Oncorhynchus mykiss (Rainbow trout), this protein is Protamine PTP4.